A 614-amino-acid polypeptide reads, in one-letter code: tRNA uridine 5-carboxymethylaminomethyl modification enzyme MnmG (614 aa).

10-15 is a binding site for FAD; that stretch reads GAGHAG. Residue 271 to 285 coordinates NAD(+); sequence GPRYCPSIEDKIVKF.

This sequence belongs to the MnmG family. Homodimer. Heterotetramer of two MnmE and two MnmG subunits. FAD is required as a cofactor.

Its subcellular location is the cytoplasm. NAD-binding protein involved in the addition of a carboxymethylaminomethyl (cmnm) group at the wobble position (U34) of certain tRNAs, forming tRNA-cmnm(5)s(2)U34. In Ureaplasma parvum serovar 3 (strain ATCC 27815 / 27 / NCTC 11736), this protein is tRNA uridine 5-carboxymethylaminomethyl modification enzyme MnmG.